A 99-amino-acid polypeptide reads, in one-letter code: UPF0751 protein BCAH820_B0138 (99 aa).

Belongs to the UPF0751 family.

In Bacillus cereus (strain AH820), this protein is UPF0751 protein BCAH820_B0138.